Reading from the N-terminus, the 426-residue chain is uncharacterized protein (426 aa).

The protein belongs to the serpin family.

This is an uncharacterized protein from Methanosarcina mazei (strain ATCC BAA-159 / DSM 3647 / Goe1 / Go1 / JCM 11833 / OCM 88) (Methanosarcina frisia).